We begin with the raw amino-acid sequence, 24 residues long: Arginine attenuator peptide (24 aa).

This sequence belongs to the arginine attenuator peptide family.

Arginine attenuator peptide (AAP) that has a regulatory role in the production of arginine-specific carbamoyl phosphate synthetase. Encoded by an upstream open reading frame (uORF) within the 5'-leader region of arginine-specific carbamoyl phosphate synthetase small chain (arg-2) mRNA, it attenuates the translation of the downstream arg-2 ORF. In the presence of high concentrations of arginine, ribosomes translating the uORF encoding AAP stall at the termination codon, resulting in reduced translation from the downstream arg-2 initiation codon. The chain is Arginine attenuator peptide from Neurospora crassa (strain ATCC 24698 / 74-OR23-1A / CBS 708.71 / DSM 1257 / FGSC 987).